Here is a 470-residue protein sequence, read N- to C-terminus: Na(+)/H(+) antiporter NhaA 2 (470 aa).

11 helical membrane-spanning segments follow: residues 34–54, 85–105, 121–141, 150–170, 179–199, 202–222, 241–261, 317–337, 357–377, 395–415, and 423–443; these read FLHIEAASGILLLVAAAIALL, LEWVVNDGLMAIFFFVVGMEI, ALPAAAALGGMLVPAGLYLLL, GWGVPMATDIAFAVGILTLLG, VLLLALAVIDDLGAIIVIAVF, SGVAITGLLVAALGIVGVFAM, WAGVYSAGIHPTIAGVIIGLI, SLIATLHPWVAFGIMPVFALA, LATATGLLVGKPLGVIGACWL, LLVLGSTAGIGFTMALFIAQL, and LAAGKLGVLAASGAAAVVALV.

This sequence belongs to the NhaA Na(+)/H(+) (TC 2.A.33) antiporter family.

Its subcellular location is the cell inner membrane. It catalyses the reaction Na(+)(in) + 2 H(+)(out) = Na(+)(out) + 2 H(+)(in). Functionally, na(+)/H(+) antiporter that extrudes sodium in exchange for external protons. This chain is Na(+)/H(+) antiporter NhaA 2, found in Myxococcus xanthus (strain DK1622).